We begin with the raw amino-acid sequence, 499 residues long: Probable cytosol aminopeptidase (499 aa).

Residues K263 and D268 each coordinate Mn(2+). The active site involves K275. Residues D286, D345, and E347 each coordinate Mn(2+). The active site involves R349.

The protein belongs to the peptidase M17 family. Mn(2+) serves as cofactor.

The protein localises to the cytoplasm. The enzyme catalyses Release of an N-terminal amino acid, Xaa-|-Yaa-, in which Xaa is preferably Leu, but may be other amino acids including Pro although not Arg or Lys, and Yaa may be Pro. Amino acid amides and methyl esters are also readily hydrolyzed, but rates on arylamides are exceedingly low.. It catalyses the reaction Release of an N-terminal amino acid, preferentially leucine, but not glutamic or aspartic acids.. In terms of biological role, presumably involved in the processing and regular turnover of intracellular proteins. Catalyzes the removal of unsubstituted N-terminal amino acids from various peptides. The polypeptide is Probable cytosol aminopeptidase (Chlamydia caviae (strain ATCC VR-813 / DSM 19441 / 03DC25 / GPIC) (Chlamydophila caviae)).